The primary structure comprises 168 residues: Crossover junction endodeoxyribonuclease RuvC (168 aa).

Residues D10, E70, and D143 contribute to the active site. Residues D10, E70, and D143 each coordinate Mg(2+).

It belongs to the RuvC family. Homodimer which binds Holliday junction (HJ) DNA. The HJ becomes 2-fold symmetrical on binding to RuvC with unstacked arms; it has a different conformation from HJ DNA in complex with RuvA. In the full resolvosome a probable DNA-RuvA(4)-RuvB(12)-RuvC(2) complex forms which resolves the HJ. Mg(2+) is required as a cofactor.

Its subcellular location is the cytoplasm. The enzyme catalyses Endonucleolytic cleavage at a junction such as a reciprocal single-stranded crossover between two homologous DNA duplexes (Holliday junction).. Functionally, the RuvA-RuvB-RuvC complex processes Holliday junction (HJ) DNA during genetic recombination and DNA repair. Endonuclease that resolves HJ intermediates. Cleaves cruciform DNA by making single-stranded nicks across the HJ at symmetrical positions within the homologous arms, yielding a 5'-phosphate and a 3'-hydroxyl group; requires a central core of homology in the junction. The consensus cleavage sequence is 5'-(A/T)TT(C/G)-3'. Cleavage occurs on the 3'-side of the TT dinucleotide at the point of strand exchange. HJ branch migration catalyzed by RuvA-RuvB allows RuvC to scan DNA until it finds its consensus sequence, where it cleaves and resolves the cruciform DNA. The protein is Crossover junction endodeoxyribonuclease RuvC of Thermotoga maritima (strain ATCC 43589 / DSM 3109 / JCM 10099 / NBRC 100826 / MSB8).